A 379-amino-acid polypeptide reads, in one-letter code: Queuine tRNA-ribosyltransferase (379 aa).

The active-site Proton acceptor is Asp-94. Residues 94–98 (DSGGF), Asp-148, Gln-191, and Gly-218 each bind substrate. The tract at residues 249–255 (GVGSPDA) is RNA binding. The active-site Nucleophile is the Asp-268. Positions 273-277 (TRIAR) are RNA binding; important for wobble base 34 recognition. Residues Cys-306, Cys-308, Cys-311, and His-337 each contribute to the Zn(2+) site.

The protein belongs to the queuine tRNA-ribosyltransferase family. Homodimer. Within each dimer, one monomer is responsible for RNA recognition and catalysis, while the other monomer binds to the replacement base PreQ1. Requires Zn(2+) as cofactor.

It carries out the reaction 7-aminomethyl-7-carbaguanine + guanosine(34) in tRNA = 7-aminomethyl-7-carbaguanosine(34) in tRNA + guanine. The protein operates within tRNA modification; tRNA-queuosine biosynthesis. Catalyzes the base-exchange of a guanine (G) residue with the queuine precursor 7-aminomethyl-7-deazaguanine (PreQ1) at position 34 (anticodon wobble position) in tRNAs with GU(N) anticodons (tRNA-Asp, -Asn, -His and -Tyr). Catalysis occurs through a double-displacement mechanism. The nucleophile active site attacks the C1' of nucleotide 34 to detach the guanine base from the RNA, forming a covalent enzyme-RNA intermediate. The proton acceptor active site deprotonates the incoming PreQ1, allowing a nucleophilic attack on the C1' of the ribose to form the product. After dissociation, two additional enzymatic reactions on the tRNA convert PreQ1 to queuine (Q), resulting in the hypermodified nucleoside queuosine (7-(((4,5-cis-dihydroxy-2-cyclopenten-1-yl)amino)methyl)-7-deazaguanosine). This chain is Queuine tRNA-ribosyltransferase, found in Staphylococcus haemolyticus (strain JCSC1435).